The sequence spans 216 residues: 3-keto-L-gulonate-6-phosphate decarboxylase UlaD (216 aa).

Aspartate 11 lines the substrate pocket. Mg(2+) contacts are provided by glutamate 33 and aspartate 62. Arginine 192 lines the substrate pocket.

It belongs to the HPS/KGPDC family. KGPDC subfamily. In terms of assembly, homodimer. Requires Mg(2+) as cofactor.

It catalyses the reaction 3-dehydro-L-gulonate 6-phosphate + H(+) = L-xylulose 5-phosphate + CO2. It participates in cofactor degradation; L-ascorbate degradation; D-xylulose 5-phosphate from L-ascorbate: step 2/4. Catalyzes the decarboxylation of 3-keto-L-gulonate-6-P into L-xylulose-5-P. Is involved in the anaerobic L-ascorbate utilization. The chain is 3-keto-L-gulonate-6-phosphate decarboxylase UlaD from Escherichia coli O127:H6 (strain E2348/69 / EPEC).